Consider the following 224-residue polypeptide: Tumor protein D52 (224 aa).

The tract at residues 29 to 53 is disordered; that stretch reads LSPSGNTSPPGSPTQNVGLLKTEPV. Threonine 35 bears the Phosphothreonine mark. Phosphoserine occurs at positions 36 and 40. The stretch at 61–113 forms a coiled coil; the sequence is VTMLSAPEALTEEEQEELRRELTKVEEEIQTLSQVLAAKEKHLAELKRKLGIS. A phosphoserine mark is found at threonine 138, serine 175, and serine 223. The interval 186–224 is disordered; sequence KVGGAKPAGGDFGEVLNSTANATSTMTTEPPPEQMTESP. The segment covering 202 to 224 has biased composition (low complexity); sequence NSTANATSTMTTEPPPEQMTESP.

It belongs to the TPD52 family. As to quaternary structure, forms a homodimer or heterodimer with other members of the family. In terms of tissue distribution, isoform 2 is expressed at higher levels in kidney and brain than in liver, lung, testis and heart. Within the brain, isoform 2 is highly expressed in the granular layer of the cerebellum, the cortex and the hippocampus. In embryos, isoform 2 is expressed in the epithelium of the developing intestine, stomach, olfactory epithelium, neuronal layers of the retina, salivary gland, kidney and dorsal root ganglion.

This chain is Tumor protein D52 (Tpd52), found in Mus musculus (Mouse).